The following is a 398-amino-acid chain: ATP-dependent RNA helicase eIF4A (398 aa).

Residues 25–53 (DSFDTMNLKPELLRGVYAYGFERPSAIQQ) carry the Q motif motif. The Helicase ATP-binding domain maps to 56 to 226 (IMPVIKGHDV…TKFMRDPVRI (171 aa)). An ATP-binding site is contributed by 69-76 (AQSGTGKT). A DEAD box motif is present at residues 174-177 (DEAD). One can recognise a Helicase C-terminal domain in the interval 237–398 (GIKQFYIAVE…EMPMNVADLI (162 aa)).

Belongs to the DEAD box helicase family. eIF4A subfamily. In terms of assembly, component of the eIF4F complex, which composition varies with external and internal environmental conditions. It is composed of at least eIF4A, eIF4E and eIF4G.

The protein localises to the cytoplasm. The enzyme catalyses ATP + H2O = ADP + phosphate + H(+). Functionally, ATP-dependent RNA helicase which is a subunit of the eIF4F complex involved in cap recognition and is required for mRNA binding to ribosome. In the current model of translation initiation, eIF4A unwinds RNA secondary structures in the 5'-UTR of mRNAs which is necessary to allow efficient binding of the small ribosomal subunit, and subsequent scanning for the initiator codon. This Botryotinia fuckeliana (strain B05.10) (Noble rot fungus) protein is ATP-dependent RNA helicase eIF4A (tif1).